The chain runs to 72 residues: Metallothionein-like protein type 2 A (72 aa).

Belongs to the metallothionein superfamily. Type 15 family. In terms of tissue distribution, leaves and roots.

In terms of biological role, metallothioneins have a high content of cysteine residues that bind various heavy metals. This is Metallothionein-like protein type 2 A (MTA) from Solanum lycopersicum (Tomato).